The primary structure comprises 150 residues: Macrodomain Ter protein (150 aa).

The protein belongs to the MatP family. As to quaternary structure, homodimer.

It localises to the cytoplasm. Its function is as follows. Required for spatial organization of the terminus region of the chromosome (Ter macrodomain) during the cell cycle. Prevents early segregation of duplicated Ter macrodomains during cell division. Binds specifically to matS, which is a 13 bp signature motif repeated within the Ter macrodomain. This chain is Macrodomain Ter protein, found in Escherichia coli O8 (strain IAI1).